Consider the following 812-residue polypeptide: Lon protease (812 aa).

One can recognise a Lon N-terminal domain in the interval 12-205 (LPMLPLRGVL…YLCELLAKEM (194 aa)). Residue 357-364 (GPPGVGKT) coordinates ATP. Residues 593–774 (ENQVGVATGL…DEVLEETLLK (182 aa)) form the Lon proteolytic domain. Catalysis depends on residues serine 680 and lysine 723.

The protein belongs to the peptidase S16 family. In terms of assembly, homohexamer. Organized in a ring with a central cavity.

The protein resides in the cytoplasm. It catalyses the reaction Hydrolysis of proteins in presence of ATP.. Its function is as follows. ATP-dependent serine protease that mediates the selective degradation of mutant and abnormal proteins as well as certain short-lived regulatory proteins. Required for cellular homeostasis and for survival from DNA damage and developmental changes induced by stress. Degrades polypeptides processively to yield small peptide fragments that are 5 to 10 amino acids long. Binds to DNA in a double-stranded, site-specific manner. This Syntrophomonas wolfei subsp. wolfei (strain DSM 2245B / Goettingen) protein is Lon protease.